The sequence spans 341 residues: Outer membrane protein U (341 aa).

The first 21 residues, 1–21 (MNKTLIALAVSAAAVATGAYA), serve as a signal peptide directing secretion.

The protein belongs to the Gram-negative porin family. In terms of assembly, homotrimer.

The protein localises to the cell outer membrane. Functionally, forms pores that allow passive diffusion of small molecules across the outer membrane. The sequence is that of Outer membrane protein U (ompU) from Vibrio cholerae serotype O1 (strain ATCC 39315 / El Tor Inaba N16961).